Consider the following 201-residue polypeptide: uncharacterized protein (201 aa).

Residues aspartate 64 to lysine 78 show a composition bias toward acidic residues. Disordered regions lie at residues aspartate 64–alanine 114 and isoleucine 182–glutamine 201. A compositionally biased stretch (basic residues) spans arginine 96–arginine 106. Polar residues predominate over residues glycine 189 to glutamine 201.

This is an uncharacterized protein from Ostreid herpesvirus 1 (isolate France) (OsHV-1).